Here is a 192-residue protein sequence, read N- to C-terminus: uncharacterized protein (192 aa).

The region spanning 29-160 (RRQAAVLIPV…PLDIYRRGDS (132 aa)) is the Nudix hydrolase domain. The Nudix box motif lies at 67–89 (GAVDSSDASLIAAALREAQEEVA). Positions 83 and 87 each coordinate Mg(2+).

Belongs to the Nudix hydrolase family. PCD1 subfamily. Requires Mn(2+) as cofactor. The cofactor is Mg(2+).

Probably mediates the hydrolysis of some nucleoside diphosphate derivatives. This is an uncharacterized protein from Citrobacter koseri (strain ATCC BAA-895 / CDC 4225-83 / SGSC4696).